The following is a 247-amino-acid chain: tRNA pseudouridine synthase A (247 aa).

The active-site Nucleophile is Asp-53. Tyr-111 is a binding site for substrate.

Belongs to the tRNA pseudouridine synthase TruA family. In terms of assembly, homodimer.

It catalyses the reaction uridine(38/39/40) in tRNA = pseudouridine(38/39/40) in tRNA. Formation of pseudouridine at positions 38, 39 and 40 in the anticodon stem and loop of transfer RNAs. The sequence is that of tRNA pseudouridine synthase A from Lacticaseibacillus casei (strain BL23) (Lactobacillus casei).